Consider the following 252-residue polypeptide: HTH-type transcriptional regulator XynR (252 aa).

Residues 4-66 (IQSVERALQI…PENGKYRLGM (63 aa)) form the HTH iclR-type domain. The H-T-H motif DNA-binding region spans 25 to 45 (KITDISKLMGLSKSTLHSLLK). Residues 81–250 (IRQKAKGWLT…GLALSRALGY (170 aa)) form the IclR-ED domain.

Activity may be controlled by xylonate. Involved in regulation of xylonate catabolism. Represses the expression of both yagA and yagEF operons. Binds mainly at a single site within the spacer of the bidirectional transcription units yagA and yagEF. This is HTH-type transcriptional regulator XynR from Escherichia coli (strain K12).